A 125-amino-acid chain; its full sequence is Ribonuclease pancreatic (125 aa).

Residues Lys-7 and Arg-10 each coordinate substrate. His-12 functions as the Proton acceptor in the catalytic mechanism. 4 cysteine pairs are disulfide-bonded: Cys-27/Cys-85, Cys-41/Cys-96, Cys-59/Cys-111, and Cys-66/Cys-73. The N-linked (GlcNAc...) asparagine glycan is linked to Asn-35. Residues 42-46 (KPVNT), Lys-67, and Arg-86 each bind substrate. The Proton donor role is filled by His-120.

It belongs to the pancreatic ribonuclease family. In terms of assembly, monomer. Interacts with and forms tight 1:1 complexes with RNH1. Dimerization of two such complexes may occur. Interaction with RNH1 inhibits this protein. As to expression, pancreas.

It localises to the secreted. The enzyme catalyses an [RNA] containing cytidine + H2O = an [RNA]-3'-cytidine-3'-phosphate + a 5'-hydroxy-ribonucleotide-3'-[RNA].. It catalyses the reaction an [RNA] containing uridine + H2O = an [RNA]-3'-uridine-3'-phosphate + a 5'-hydroxy-ribonucleotide-3'-[RNA].. Functionally, endonuclease that catalyzes the cleavage of RNA on the 3' side of pyrimidine nucleotides. Acts on single-stranded and double-stranded RNA. The chain is Ribonuclease pancreatic (RNASE1) from Spalax ehrenbergi (Middle East blind mole rat).